A 742-amino-acid polypeptide reads, in one-letter code: MKFLAFGLIYFHFCILNRCEYITSSTIQKCYNSSNEPNNCSQKAVIVLSLENGQIANTEQVVATLNQLSDSGVNKQLQNSFIFEVTKSPVTALFPLIYLQDFNSQPLEQVIATTLFSCKDGFYDSSPTCKFQYDSKGQKILDSQGYCCYCSLSDILGMGNDLSRGKVCYALNLGAGSATAHCLKFSPLWYSAFKIQQYQLYFEVNINIYTVDSQNQKNLKQTLKLSTSNPTMKSSDNSTISKIIGTFTPTQPPADLSSYYLVKPSFPATDPRVLQGISSWMFVDKTMFTLDGTQCNKIGVSYSGFRQQSSSCSQPVGSCLQNQLENLYQSDLILLSQNKQPKYLLESQGNFNQVQFQGQTILQQGLSGSASTLITIEIDAAQIKFVTNLGIGCISQCSINNFESHSGNGKLVALVQNQGNYSAEFVLGFNCSSNVQPIQGQKLFLTANQLYNFNCSVSVNSDISAINNNCTINLYDAIGNQLDSKNILFNTTSTNHTSNQGNNTGQQQSSQEYKSSQSCSDKCSSFWSFWCYFSAGCIKEAFKSIASIAGVASALALVIFLAKNGYLVPIIRFLCCCCCKSKKKENEKNKDKTDKKSIQESCSYDRSCCSHSISQSYQVENKNKYKRSKIQRSFSSESCQDKSKKIINELSNLEETFEANKLYANIDKNSSIFEYFGFKKSFTFILYERNDILFLPQNSTILDMIGALQPQKGSYLAQKFLEIVNKNALKVVSTSPLYLLIE.

The N-terminal stretch at 1 to 19 is a signal peptide; it reads MKFLAFGLIYFHFCILNRC. Topologically, residues 20–540 are extracellular; that stretch reads EYITSSTIQK…CYFSAGCIKE (521 aa). Intrachain disulfides connect C30-C40, C118-C147, C129-C182, C148-C312, C150-C168, C295-C319, and C431-C470. The tract at residues 152–179 is important for membrane fusion; the sequence is LSDILGMGNDLSRGKVCYALNLGAGSAT. A helical membrane pass occupies residues 541–561; sequence AFKSIASIAGVASALALVIFL. The Cytoplasmic segment spans residues 562–742; sequence AKNGYLVPII…STSPLYLLIE (181 aa).

It belongs to the HAP2/GCS1 family.

The protein resides in the cell membrane. Its subcellular location is the cell junction. In terms of biological role, during fertilization, required for the formation of intercellular membrane pores and subsequent exchange of gametic pronuclei between cells. Probably initiates the formation of intercellular membrane pores by inserting part of its extracellular domain into the cell membrane of the adjoining cell in the mating pair. Mating requires the presence of HAP2 on at least one of the two cells. Mating efficiency is high when HAP2 is present on both cells, and is strongly reduced when HAP2 is present on only one of the two cells. This chain is Hapless 2, found in Tetrahymena thermophila.